We begin with the raw amino-acid sequence, 285 residues long: uncharacterized protein (285 aa).

Residues M1–D25 form a disordered region. I45 to V69 lines the NADP(+) pocket. S177 serves as a coordination point for substrate. The Proton acceptor role is filled by Y190.

Belongs to the short-chain dehydrogenases/reductases (SDR) family.

This is an uncharacterized protein from Bacillus subtilis (strain 168).